The sequence spans 645 residues: E3 ubiquitin-protein ligase ORTHRUS 2 (645 aa).

The PHD-type zinc finger occupies 12–63 (DGVCMRCKSNPPPEESLTCGTCVTPWHVSCLSSPPKTLASTLQWHCPDCSGE). Residues 96 to 133 (LSTEEKAKMRQRLLSGKGVEEDDEEEKRKKKGKGKNPN) are disordered. The segment at 146–185 (CSFCMQLPERPVTKPCGHNACLKCFEKWMGQGKRTCGKCR) adopts an RING-type 1 zinc-finger fold. The YDG domain maps to 273 to 422 (VRNQGLLVGE…FKVCRYLFVR (150 aa)). An RING-type 2 zinc finger spans residues 518 to 575 (CQICQQVLTLPVTTPCAHNFCKACLEAKFAGKTLVRERSTGGRTLRSRKNVLNCPCCP). Positions 583-613 (QNPQVNREVAEVIEKLKTQEEDTAELEDEDE) form a coiled coil. The tract at residues 599–645 (KTQEEDTAELEDEDEGECSGTTPEEDSEQPKKRIKLDTDATVSATIR) is disordered. A compositionally biased stretch (acidic residues) spans 603–625 (EDTAELEDEDEGECSGTTPEEDS). The segment covering 626 to 636 (EQPKKRIKLDT) has biased composition (basic and acidic residues).

Interacts with histones CENH3, HTB2, HTR3 and H4. As to expression, mostly expressed in inflorescence and, to a lower extent, in leaves.

It localises to the nucleus. It catalyses the reaction S-ubiquitinyl-[E2 ubiquitin-conjugating enzyme]-L-cysteine + [acceptor protein]-L-lysine = [E2 ubiquitin-conjugating enzyme]-L-cysteine + N(6)-ubiquitinyl-[acceptor protein]-L-lysine.. Its pathway is protein modification; protein ubiquitination. Its function is as follows. E3 ubiquitin-protein ligase. Participates in CpG methylation-dependent transcriptional regulation and epigenetic transcriptional silencing. Mediates ubiquitination with the E2 ubiquitin-conjugating enzyme UBC11. Promotes methylation-mediated gene silencing leading, for example, to early flowering. Associates with methylated DNA, and can bind to CpG, CpNpG, and CpNpN DNA motifs, with a strong preference for methylated forms, and with highest affinity for CpG substrate. Probably acts at the DNA methylation?histone interface to maintain centromeric heterochromatin. The protein is E3 ubiquitin-protein ligase ORTHRUS 2 (ORTH2) of Arabidopsis thaliana (Mouse-ear cress).